Here is a 333-residue protein sequence, read N- to C-terminus: Glycogenin-1 (333 aa).

Thr2 is subject to N-acetylthreonine. UDP contacts are provided by Leu9, Thr11, Asn12, and Tyr15. Residues Leu9, Thr11, Asn12, and Tyr15 each coordinate UDP-alpha-D-glucose. Position 44 is a phosphoserine (Ser44). Residue Arg77 coordinates UDP. Residues Arg77, Lys86, Asp102, Ala103, Asp104, Asn133, Ser134, Asp160, Asp163, and Gln164 each contribute to the UDP-alpha-D-glucose site. Asp102, Ala103, and Asp104 together coordinate UDP. Asp102 contributes to the Mn(2+) binding site. Mn(2+) is bound at residue Asp104. Residue Tyr195 is glycosylated (O-linked (Glc...) tyrosine). Residues His212, Gly215, and Lys218 each contribute to the UDP site. His212 is a binding site for Mn(2+). UDP-alpha-D-glucose is bound by residues Gly215 and Lys218. Residues 284–316 are interaction with GYS1; it reads SDLSFGEAPAAPQPSMSSEERKERWEQGQADYM. Residues 290–316 form a disordered region; the sequence is EAPAAPQPSMSSEERKERWEQGQADYM.

It belongs to the glycosyltransferase 8 family. Glycogenin subfamily. In terms of assembly, part of the GYS1-GYG1 complex, a heterooctamer composed of a tetramer of GYS1 and 2 dimers of GYG1, where each GYS1 protomer binds to one GYG1 subunit (via GYG1 C-terminus); the GYS1 tetramer may dissociate from GYG1 dimers to continue glycogen polymerization on its own. May also form a heterooctamer complex with GYS2. Mn(2+) serves as cofactor. In terms of processing, self-glycosylated by the transfer of glucose residues from UDP-glucose to itself, forming an alpha-1,4-glycan of around 10 residues attached to Tyr-195. Post-translationally, phosphorylated. Skeletal muscle, heart, to a lesser extent in kidney, lung and brain.

The protein localises to the cytoplasm. It is found in the nucleus. It catalyses the reaction L-tyrosyl-[glycogenin] + UDP-alpha-D-glucose = alpha-D-glucosyl-L-tyrosyl-[glycogenin] + UDP + H(+). The catalysed reaction is [1,4-alpha-D-glucosyl](n)-L-tyrosyl-[glycogenin] + UDP-alpha-D-glucose = [1,4-alpha-D-glucosyl](n+1)-L-tyrosyl-[glycogenin] + UDP + H(+). It participates in glycan biosynthesis; glycogen biosynthesis. Glycogenin participates in the glycogen biosynthetic process along with glycogen synthase and glycogen branching enzyme. It catalyzes the formation of a short alpha (1,4)-glucosyl chain covalently attached via a glucose 1-O-tyrosyl linkage to internal tyrosine residues and these chains act as primers for the elongation reaction catalyzed by glycogen synthase. The chain is Glycogenin-1 from Mus musculus (Mouse).